The following is a 156-amino-acid chain: MASISATLPSPLLLTQRKSNLTSIQKLPFSLTRGTNDLSPLSLTRNPSSISLMVKASGESSDSSTDLDVVSTIQNVWDKSEDRLGLIGLGFAGIVALWASLNLITAIDKLPVISSGFELVGILFSTWFTYRYLLFKPDRQELSKIVKKSVADILGQ.

The transit peptide at 1–55 directs the protein to the chloroplast; sequence MASISATLPSPLLLTQRKSNLTSIQKLPFSLTRGTNDLSPLSLTRNPSSISLMVK. Residues 56–83 are Stromal-facing; sequence ASGESSDSSTDLDVVSTIQNVWDKSEDR. A helical transmembrane segment spans residues 84-104; that stretch reads LGLIGLGFAGIVALWASLNLI. Over 105–109 the chain is Lumenal; that stretch reads TAIDK. The chain crosses the membrane as a helical span at residues 110–130; sequence LPVISSGFELVGILFSTWFTY. The Stromal segment spans residues 131–156; sequence RYLLFKPDRQELSKIVKKSVADILGQ.

It belongs to the CURT family. Homo- and heterodimers and trimers. Interacts with PSAD2.

It is found in the plastid. The protein localises to the chloroplast thylakoid membrane. Determines thylakoid architecture by inducing membrane curvature. This chain is Protein CURVATURE THYLAKOID 1C, chloroplastic (CURT1C), found in Arabidopsis thaliana (Mouse-ear cress).